Reading from the N-terminus, the 55-residue chain is ATP synthase F(0) complex subunit 8 (55 aa).

The chain crosses the membrane as a helical span at residues 10-30; it reads FPIMMLSWLIFSLIIQPKLLL. The interval 35–55 is disordered; it reads NPPSNKTTTTTRSNPWTWPWT. The span at 37–55 shows a compositional bias: low complexity; sequence PSNKTTTTTRSNPWTWPWT.

It belongs to the ATPase protein 8 family. Component of the ATP synthase complex composed at least of ATP5F1A/subunit alpha, ATP5F1B/subunit beta, ATP5MC1/subunit c (homooctomer), MT-ATP6/subunit a, MT-ATP8/subunit 8, ATP5ME/subunit e, ATP5MF/subunit f, ATP5MG/subunit g, ATP5MK/subunit k, ATP5MJ/subunit j, ATP5F1C/subunit gamma, ATP5F1D/subunit delta, ATP5F1E/subunit epsilon, ATP5PF/subunit F6, ATP5PB/subunit b, ATP5PD/subunit d, ATP5PO/subunit OSCP. ATP synthase complex consists of a soluble F(1) head domain (subunits alpha(3) and beta(3)) - the catalytic core - and a membrane F(0) domain - the membrane proton channel (subunits c, a, 8, e, f, g, k and j). These two domains are linked by a central stalk (subunits gamma, delta, and epsilon) rotating inside the F1 region and a stationary peripheral stalk (subunits F6, b, d, and OSCP).

The protein resides in the mitochondrion membrane. Functionally, subunit 8, of the mitochondrial membrane ATP synthase complex (F(1)F(0) ATP synthase or Complex V) that produces ATP from ADP in the presence of a proton gradient across the membrane which is generated by electron transport complexes of the respiratory chain. ATP synthase complex consist of a soluble F(1) head domain - the catalytic core - and a membrane F(1) domain - the membrane proton channel. These two domains are linked by a central stalk rotating inside the F(1) region and a stationary peripheral stalk. During catalysis, ATP synthesis in the catalytic domain of F(1) is coupled via a rotary mechanism of the central stalk subunits to proton translocation. In vivo, can only synthesize ATP although its ATP hydrolase activity can be activated artificially in vitro. Part of the complex F(0) domain. The polypeptide is ATP synthase F(0) complex subunit 8 (Opisthocomus hoazin (Hoatzin)).